The chain runs to 320 residues: Acyl-coenzyme A thioesterase 8 (320 aa).

Residues D233, S255, and Q305 each act as charge relay system in the active site. The Microbody targeting signal signature appears at 318 to 320 (SKL).

It belongs to the C/M/P thioester hydrolase family. As to quaternary structure, homodimer. In terms of tissue distribution, ubiquitous.

It is found in the peroxisome matrix. It carries out the reaction choloyl-CoA + H2O = cholate + CoA + H(+). It catalyses the reaction chenodeoxycholoyl-CoA + H2O = chenodeoxycholate + CoA + H(+). The catalysed reaction is acetyl-CoA + H2O = acetate + CoA + H(+). The enzyme catalyses malonyl-CoA + H2O = malonate + CoA + H(+). It carries out the reaction acetoacetyl-CoA + H2O = acetoacetate + CoA + H(+). It catalyses the reaction propanoyl-CoA + H2O = propanoate + CoA + H(+). The catalysed reaction is butanoyl-CoA + H2O = butanoate + CoA + H(+). The enzyme catalyses succinyl-CoA + H2O = succinate + CoA + H(+). It carries out the reaction glutaryl-CoA + H2O = glutarate + CoA + H(+). It catalyses the reaction hexanoyl-CoA + H2O = hexanoate + CoA + H(+). The catalysed reaction is hexanedioyl-CoA + H2O = hexanedioate + CoA + H(+). The enzyme catalyses octanoyl-CoA + H2O = octanoate + CoA + H(+). It carries out the reaction octanedioyl-CoA + H2O = octanedioate + CoA + H(+). It catalyses the reaction decanoyl-CoA + H2O = decanoate + CoA + H(+). The catalysed reaction is decanedioyl-CoA + H2O = decanedioate + CoA + H(+). The enzyme catalyses dodecanoyl-CoA + H2O = dodecanoate + CoA + H(+). It carries out the reaction dodecanedioyl-CoA + H2O = dodecanedioate + CoA + H(+). It catalyses the reaction tetradecanoyl-CoA + H2O = tetradecanoate + CoA + H(+). The catalysed reaction is (9Z)-tetradecenoyl-CoA + H2O = (9Z)-tetradecenoate + CoA + H(+). The enzyme catalyses hexadecanoyl-CoA + H2O = hexadecanoate + CoA + H(+). It carries out the reaction (9Z)-hexadecenoyl-CoA + H2O = (9Z)-hexadecenoate + CoA + H(+). It catalyses the reaction octadecanoyl-CoA + H2O = octadecanoate + CoA + H(+). The catalysed reaction is (9Z)-octadecenoyl-CoA + H2O = (9Z)-octadecenoate + CoA + H(+). The enzyme catalyses (9Z,12Z)-octadecadienoyl-CoA + H2O = (9Z,12Z)-octadecadienoate + CoA + H(+). It carries out the reaction eicosanoyl-CoA + H2O = eicosanoate + CoA + H(+). It catalyses the reaction (5Z,8Z,11Z,14Z)-eicosatetraenoyl-CoA + H2O = (5Z,8Z,11Z,14Z)-eicosatetraenoate + CoA + H(+). The catalysed reaction is 4,8-dimethylnonanoyl-CoA + H2O = 4,8-dimethylnonanoate + CoA + H(+). The enzyme catalyses 2,6-dimethylheptanoyl-CoA + H2O = 2,6-dimethylheptanoate + CoA + H(+). It carries out the reaction (3S)-3-hydroxy-3-methylglutaryl-CoA + H2O = 3-hydroxy-3-methylglutarate + CoA + H(+). It catalyses the reaction 3alpha,7alpha,12alpha-trihydroxy-5beta-cholestan-26-oyl-CoA + H2O = 3alpha,7alpha,12alpha-trihydroxy-5beta-cholestan-26-oate + CoA + H(+). The catalysed reaction is 2-methyloctadecanoyl-CoA + H2O = 2-methyloctadecanoate + CoA + H(+). The enzyme catalyses prostaglandin F2alpha-CoA + H2O = prostaglandin F2alpha + CoA + H(+). It participates in lipid metabolism; fatty acid metabolism. Its activity is regulated as follows. Inhibited by CoASH (IC(50)=10-15 uM). Also inhibited by cysteine-reactive agents. In terms of biological role, catalyzes the hydrolysis of acyl-CoAs into free fatty acids and coenzyme A (CoASH), regulating their respective intracellular levels. Displays no strong substrate specificity with respect to the carboxylic acid moiety of Acyl-CoAs. Hydrolyzes medium length (C2 to C20) straight-chain, saturated and unsaturated acyl-CoAS but is inactive towards substrates with longer aliphatic chains. Moreover, it catalyzes the hydrolysis of CoA esters of bile acids, such as choloyl-CoA and chenodeoxycholoyl-CoA and competes with bile acid CoA:amino acid N-acyltransferase (BAAT). Is also able to hydrolyze CoA esters of dicarboxylic acids. It is involved in the metabolic regulation of peroxisome proliferation. In Mus musculus (Mouse), this protein is Acyl-coenzyme A thioesterase 8 (Acot8).